Reading from the N-terminus, the 96-residue chain is MANFVLKAEKREDLGTGASRRLRRAGKIPAVIYGGEKEAVSVLLDHDKVLHSTEDKAFFSSEITLDIDGKQEKVIIKALQRHPYKVKLIHADFMRV.

The protein belongs to the bacterial ribosomal protein bL25 family. In terms of assembly, part of the 50S ribosomal subunit; part of the 5S rRNA/L5/L18/L25 subcomplex. Contacts the 5S rRNA. Binds to the 5S rRNA independently of L5 and L18.

Its function is as follows. This is one of the proteins that binds to the 5S RNA in the ribosome where it forms part of the central protuberance. This is Large ribosomal subunit protein bL25 from Francisella tularensis subsp. tularensis (strain FSC 198).